Reading from the N-terminus, the 201-residue chain is Small ribosomal subunit protein uS4 (201 aa).

Positions 93 to 153 constitute an S4 RNA-binding domain; sequence ARLDNVVYRM…EKSKSLEAID (61 aa).

This sequence belongs to the universal ribosomal protein uS4 family. As to quaternary structure, part of the 30S ribosomal subunit. Contacts protein S5. The interaction surface between S4 and S5 is involved in control of translational fidelity.

One of the primary rRNA binding proteins, it binds directly to 16S rRNA where it nucleates assembly of the body of the 30S subunit. Functionally, with S5 and S12 plays an important role in translational accuracy. The protein is Small ribosomal subunit protein uS4 of Flavobacterium psychrophilum (strain ATCC 49511 / DSM 21280 / CIP 103535 / JIP02/86).